The sequence spans 788 residues: Phenylalanine--tRNA ligase beta subunit (788 aa).

The region spanning 39 to 147 (FNVSGEIITA…DPVELGVNVV (109 aa)) is the tRNA-binding domain. The B5 domain occupies 399-472 (IEPKKVMLRK…RIYGYEKVES (74 aa)). Residues aspartate 450, aspartate 456, glutamate 459, and glutamate 460 each contribute to the Mg(2+) site. In terms of domain architecture, FDX-ACB spans 694–787 (PRFPAVRRDI…AEREFGIRRR (94 aa)).

It belongs to the phenylalanyl-tRNA synthetase beta subunit family. Type 1 subfamily. In terms of assembly, tetramer of two alpha and two beta subunits. Mg(2+) serves as cofactor.

The protein localises to the cytoplasm. It carries out the reaction tRNA(Phe) + L-phenylalanine + ATP = L-phenylalanyl-tRNA(Phe) + AMP + diphosphate + H(+). This chain is Phenylalanine--tRNA ligase beta subunit (pheT), found in Thermotoga maritima (strain ATCC 43589 / DSM 3109 / JCM 10099 / NBRC 100826 / MSB8).